The chain runs to 251 residues: Small ribosomal subunit protein uS2 (251 aa).

It belongs to the universal ribosomal protein uS2 family.

The polypeptide is Small ribosomal subunit protein uS2 (Synechococcus sp. (strain ATCC 27144 / PCC 6301 / SAUG 1402/1) (Anacystis nidulans)).